The chain runs to 105 residues: Large ribosomal subunit protein uL24 (105 aa).

This sequence belongs to the universal ribosomal protein uL24 family. Part of the 50S ribosomal subunit.

One of two assembly initiator proteins, it binds directly to the 5'-end of the 23S rRNA, where it nucleates assembly of the 50S subunit. Its function is as follows. One of the proteins that surrounds the polypeptide exit tunnel on the outside of the subunit. The chain is Large ribosomal subunit protein uL24 from Francisella tularensis subsp. tularensis (strain FSC 198).